The chain runs to 480 residues: Phenolic acid decarboxylase (480 aa).

Asparagine 163, histidine 185, and glutamate 227 together coordinate Mn(2+). Prenylated FMN is bound by residues 163–168 and 184–185; these read NVGTYR and MH. Glutamate 278 functions as the Proton donor in the catalytic mechanism. Positions 443-466 are disordered; the sequence is TTPVPPEPNPRETQLLDPPDGTEE.

The protein belongs to the UbiD family. YclC subfamily. As to quaternary structure, homohexamer. It depends on prenylated FMN as a cofactor. Mn(2+) serves as cofactor.

It carries out the reaction 4-hydroxybenzoate + H(+) = phenol + CO2. It catalyses the reaction 3,4-dihydroxybenzoate + H(+) = catechol + CO2. Inhibited by Zn(2+), (2,3,4)-trihydroxybenzoate and (3,4,5)-trihydroxybenzoate. Ammonium and rubidium ions decrease the activity of the carboxylation of 3,4-dihydroxybenzoate by about 20%. In terms of biological role, involved in the non-oxidative decarboxylation and detoxification of phenolic derivatives under anaerobic conditions. Oxygen-sensitive phenolic acid decarboxylase that catalyzes the reversible decarboxylation of 4-hydroxybenzoate and 3,4-dihydroxybenzoate. This Sedimentibacter hydroxybenzoicus (Clostridium hydroxybenzoicum) protein is Phenolic acid decarboxylase.